The sequence spans 251 residues: Plant UBX domain-containing protein 1 (251 aa).

Position 1 is an N-acetylmethionine (methionine 1). The region spanning 104–180 is the UBX domain; that stretch reads SKLTKAVIRV…GFVPGAIVYF (77 aa). The tract at residues 212–251 is disordered; the sequence is AVEPVESSSEPATVDSSAVPVEHERKSTEKKTTKPKWFKM. Polar residues predominate over residues 217–227; the sequence is ESSSEPATVDS. Over residues 232 to 243 the composition is skewed to basic and acidic residues; the sequence is VEHERKSTEKKT.

As to quaternary structure, interacts with CDC48A (non-hexameric) via its UBX-containing C-terminal domain.

Its subcellular location is the cytoplasm. Regulates CDC48A by inhibiting its ATPase activity and by promoting the disassembly of the active hexamer. This Arabidopsis thaliana (Mouse-ear cress) protein is Plant UBX domain-containing protein 1.